The primary structure comprises 65 residues: Large ribosomal subunit protein bL35 (65 aa).

The segment at 1 to 51 (MPKMKTNRAAAKRFKKTANGGLKSANAYTSHRFHGKTKKQRRQLRGTDMMD) is disordered. Over residues 31-44 (HRFHGKTKKQRRQL) the composition is skewed to basic residues.

This sequence belongs to the bacterial ribosomal protein bL35 family.

In Pediococcus pentosaceus (strain ATCC 25745 / CCUG 21536 / LMG 10740 / 183-1w), this protein is Large ribosomal subunit protein bL35.